The following is a 237-amino-acid chain: Ribonuclease PH (237 aa).

Phosphate is bound by residues arginine 86 and glycine 124–arginine 126.

The protein belongs to the RNase PH family. In terms of assembly, homohexameric ring arranged as a trimer of dimers.

The catalysed reaction is tRNA(n+1) + phosphate = tRNA(n) + a ribonucleoside 5'-diphosphate. Its function is as follows. Phosphorolytic 3'-5' exoribonuclease that plays an important role in tRNA 3'-end maturation. Removes nucleotide residues following the 3'-CCA terminus of tRNAs; can also add nucleotides to the ends of RNA molecules by using nucleoside diphosphates as substrates, but this may not be physiologically important. Probably plays a role in initiation of 16S rRNA degradation (leading to ribosome degradation) during starvation. The polypeptide is Ribonuclease PH (Coxiella burnetii (strain RSA 331 / Henzerling II)).